Consider the following 84-residue polypeptide: Large ribosomal subunit protein uL23 (84 aa).

It belongs to the universal ribosomal protein uL23 family. As to quaternary structure, part of the 50S ribosomal subunit. Contacts protein L29.

In terms of biological role, binds to 23S rRNA. One of the proteins that surrounds the polypeptide exit tunnel on the outside of the ribosome. This chain is Large ribosomal subunit protein uL23, found in Haloquadratum walsbyi (strain DSM 16790 / HBSQ001).